Consider the following 212-residue polypeptide: Large ribosomal subunit protein uL3 (212 aa).

The disordered stretch occupies residues 130–155 (KRGNMTHGSKNHRLPGSTGAGTTPGR).

It belongs to the universal ribosomal protein uL3 family. Part of the 50S ribosomal subunit. Forms a cluster with proteins L14 and L19.

In terms of biological role, one of the primary rRNA binding proteins, it binds directly near the 3'-end of the 23S rRNA, where it nucleates assembly of the 50S subunit. This is Large ribosomal subunit protein uL3 from Rippkaea orientalis (strain PCC 8801 / RF-1) (Cyanothece sp. (strain PCC 8801)).